A 414-amino-acid chain; its full sequence is Serine hydroxymethyltransferase (414 aa).

(6S)-5,6,7,8-tetrahydrofolate-binding positions include leucine 121 and 125 to 127; that span reads GHL. Lysine 229 carries the post-translational modification N6-(pyridoxal phosphate)lysine.

The protein belongs to the SHMT family. In terms of assembly, homodimer. It depends on pyridoxal 5'-phosphate as a cofactor.

Its subcellular location is the cytoplasm. The enzyme catalyses (6R)-5,10-methylene-5,6,7,8-tetrahydrofolate + glycine + H2O = (6S)-5,6,7,8-tetrahydrofolate + L-serine. Its pathway is one-carbon metabolism; tetrahydrofolate interconversion. It functions in the pathway amino-acid biosynthesis; glycine biosynthesis; glycine from L-serine: step 1/1. In terms of biological role, catalyzes the reversible interconversion of serine and glycine with tetrahydrofolate (THF) serving as the one-carbon carrier. This reaction serves as the major source of one-carbon groups required for the biosynthesis of purines, thymidylate, methionine, and other important biomolecules. Also exhibits THF-independent aldolase activity toward beta-hydroxyamino acids, producing glycine and aldehydes, via a retro-aldol mechanism. This is Serine hydroxymethyltransferase from Variovorax paradoxus (strain S110).